The sequence spans 429 residues: N5-carboxyaminoimidazole ribonucleotide synthase (429 aa).

ATP is bound by residues lysine 117, lysine 157, glutamate 194–valine 197, glutamate 202, and asparagine 280–glutamate 281. The region spanning arginine 121–leucine 310 is the ATP-grasp domain. The tract at residues arginine 406–leucine 429 is disordered.

This sequence belongs to the PurK/PurT family. As to quaternary structure, homodimer.

It carries out the reaction 5-amino-1-(5-phospho-beta-D-ribosyl)imidazole + hydrogencarbonate + ATP = 5-carboxyamino-1-(5-phospho-D-ribosyl)imidazole + ADP + phosphate + 2 H(+). It participates in purine metabolism; IMP biosynthesis via de novo pathway; 5-amino-1-(5-phospho-D-ribosyl)imidazole-4-carboxylate from 5-amino-1-(5-phospho-D-ribosyl)imidazole (N5-CAIR route): step 1/2. Catalyzes the ATP-dependent conversion of 5-aminoimidazole ribonucleotide (AIR) and HCO(3)(-) to N5-carboxyaminoimidazole ribonucleotide (N5-CAIR). The sequence is that of N5-carboxyaminoimidazole ribonucleotide synthase from Mycobacterium bovis (strain ATCC BAA-935 / AF2122/97).